Here is a 462-residue protein sequence, read N- to C-terminus: MILGPDGILNRDTRGDWVRLRTLILLRWMAVAGQLAAIVVTDWYLGVRLPMGLCFMAVGASVIANVIATFVFPQNRRLTEFQALMILLFDLTQLSFLLFLTGGLTNPFALLILAPVTISALALELRTTVILGAIAIGLLTFTAYFHLPLILADGSSLSVPRMFEFGFWLAIVIGILFLGLYSRRVAIEIRSMSDALLATQMALDREQKLTDLGGVVAAAAHELGTPLATIKLVSSELAEELSEQPALRDDAELIREQADRCRDILRSMGRAGKDDLQMRQAPLGEVLREAAEPHVGRGKRVEFDLYPSRGGDERQPVILRRPEVIHGLRNLIQNAVDFARSTVWIDGEWTGDRIAIRIVDDGEGYPPAIIGRIGDPFVRQRRAEESQSRRPGYEGMGLGLFIAKTLLERSGAELSFANAADPFLRSHERPERCGAIVEVIWPVDRLVVVRNAPLGENVLIQT.

The Cytoplasmic segment spans residues methionine 1–leucine 25. Residues leucine 26–leucine 45 traverse the membrane as a helical segment. The Extracellular portion of the chain corresponds to glycine 46–methionine 51. Residues glycine 52–phenylalanine 70 traverse the membrane as a helical segment. Residues valine 71 to leucine 78 are Cytoplasmic-facing. A helical membrane pass occupies residues threonine 79 to phenylalanine 96. Residues leucine 97–glycine 103 lie on the Extracellular side of the membrane. A helical membrane pass occupies residues leucine 104–leucine 123. Over glutamate 124–valine 129 the chain is Cytoplasmic. Residues isoleucine 130–leucine 149 form a helical membrane-spanning segment. Over isoleucine 150 to glutamate 164 the chain is Extracellular. The chain crosses the membrane as a helical span at residues phenylalanine 165–serine 182. The Cytoplasmic segment spans residues arginine 183 to threonine 462. A Histidine kinase domain is found at alanine 218 to arginine 445. A Phosphohistidine; by autocatalysis modification is found at histidine 221.

The protein resides in the cell inner membrane. The enzyme catalyses ATP + protein L-histidine = ADP + protein N-phospho-L-histidine.. Member of the two-component regulatory system RegB/RegA. Involved in the positive regulation of photosynthesis gene expression in response to anaerobiosis. Also involved in positive regulation of the cbbI and cbbII Calvin cycle CO2 fixation operons, as well as in regulation of expression of genes involved in alternative CO2 fixation pathways. Phosphorylates RegA/PrrA. In Cereibacter sphaeroides (strain ATCC 17023 / DSM 158 / JCM 6121 / CCUG 31486 / LMG 2827 / NBRC 12203 / NCIMB 8253 / ATH 2.4.1.) (Rhodobacter sphaeroides), this protein is Sensor histidine kinase RegB (regB).